The following is a 604-amino-acid chain: Kinesin-like protein KIN-14O (604 aa).

Residues 22–61 (MLNHDKDISALQEEISALRSRQRHLDHRRQEALDKLIDLK) are a coiled coil. The Kinesin motor domain occupies 63-387 (SIRVFCRVRP…LSFAKRARSI (325 aa)). Residue 141–148 (GQTGTGKT) coordinates ATP. The stretch at 383–443 (RARSIESSKE…EERKKLSSSA (61 aa)) forms a coiled coil. Disordered regions lie at residues 465-511 (DSAE…KTRL) and 565-604 (SNNS…SSLT). Residues 565-574 (SNNSIDSTAA) show a composition bias toward polar residues. The span at 593–604 (LHQHRRRMSSLT) shows a compositional bias: basic residues.

It belongs to the TRAFAC class myosin-kinesin ATPase superfamily. Kinesin family. KIN-14 subfamily.

In Oryza sativa subsp. japonica (Rice), this protein is Kinesin-like protein KIN-14O.